The sequence spans 272 residues: Testis-specific gene 13 protein (272 aa).

This is Testis-specific gene 13 protein (TSGA13) from Bos taurus (Bovine).